The sequence spans 126 residues: Histone H2B type 2-B (126 aa).

Over residues 1–12 (MPDPAKSAPAPK) the composition is skewed to low complexity. The tract at residues 1–36 (MPDPAKSAPAPKKGSKKAVTKVQKKDGKKRKRSRKE) is disordered. Pro-2 bears the N-acetylproline mark. Lys-6 bears the N6-(2-hydroxyisobutyryl)lysine; alternate mark. An N6-(beta-hydroxybutyryl)lysine; alternate modification is found at Lys-6. Position 6 is an N6-acetyllysine; alternate (Lys-6). At Lys-6 the chain carries N6-butyryllysine; alternate. Lys-6 carries the N6-crotonyllysine; alternate modification. Lys-6 is subject to N6-lactoyllysine; alternate. Lys-6 participates in a covalent cross-link: Glycyl lysine isopeptide (Lys-Gly) (interchain with G-Cter in SUMO2); alternate. Ser-7 is modified (ADP-ribosylserine). Residue Lys-12 is modified to N6-(beta-hydroxybutyryl)lysine; alternate. N6-acetyllysine; alternate is present on residues Lys-12 and Lys-13. Residues Lys-12 and Lys-13 each carry the N6-crotonyllysine; alternate modification. Lys-12 is subject to N6-lactoyllysine; alternate. Lys-13 is subject to N6-(2-hydroxyisobutyryl)lysine; alternate. Ser-15 is modified (phosphoserine; by STK4/MST1). 4 positions are modified to N6-acetyllysine; alternate: Lys-16, Lys-17, Lys-21, and Lys-24. Lys-16, Lys-17, Lys-21, and Lys-24 each carry N6-crotonyllysine; alternate. Lys-16, Lys-17, Lys-21, and Lys-24 each carry N6-lactoyllysine; alternate. At Lys-17 the chain carries N6-glutaryllysine; alternate. An N6-(2-hydroxyisobutyryl)lysine; alternate mark is found at Lys-21 and Lys-24. An N6-(beta-hydroxybutyryl)lysine; alternate modification is found at Lys-21. Lys-21 is subject to N6-butyryllysine; alternate. Residue Lys-21 forms a Glycyl lysine isopeptide (Lys-Gly) (interchain with G-Cter in SUMO2); alternate linkage. Lys-25 carries the N6-(2-hydroxyisobutyryl)lysine modification. Lys-35 is subject to N6-(2-hydroxyisobutyryl)lysine; alternate. Lys-35 is subject to N6-(beta-hydroxybutyryl)lysine; alternate. At Lys-35 the chain carries N6-crotonyllysine; alternate. An N6-glutaryllysine; alternate modification is found at Lys-35. Lys-35 carries the post-translational modification N6-succinyllysine; alternate. Lys-35 is covalently cross-linked (Glycyl lysine isopeptide (Lys-Gly) (interchain with G-Cter in ubiquitin); alternate). The residue at position 36 (Glu-36) is a PolyADP-ribosyl glutamic acid. A Phosphoserine; by AMPK modification is found at Ser-37. An N6-(2-hydroxyisobutyryl)lysine; alternate mark is found at Lys-44, Lys-47, and Lys-58. At Lys-44 the chain carries N6-lactoyllysine; alternate. Lys-44 and Lys-47 each carry N6-glutaryllysine; alternate. Lys-47 is subject to N6-methyllysine; alternate. An N6,N6-dimethyllysine; alternate modification is found at Lys-58. Arg-80 carries the dimethylated arginine modification. Lys-86 carries the N6-(2-hydroxyisobutyryl)lysine; alternate modification. An N6-acetyllysine; alternate modification is found at Lys-86. At Lys-86 the chain carries N6-lactoyllysine; alternate. N6,N6,N6-trimethyllysine; alternate is present on Lys-86. An omega-N-methylarginine mark is found at Arg-87 and Arg-93. An N6-(2-hydroxyisobutyryl)lysine; alternate modification is found at Lys-109. N6-(beta-hydroxybutyryl)lysine; alternate is present on Lys-109. Lys-109 is subject to N6-lactoyllysine; alternate. Lys-109 is modified (N6-glutaryllysine; alternate). N6-methyllysine; alternate is present on Lys-109. Ser-113 carries O-linked (GlcNAc) serine glycosylation. Phosphothreonine is present on Thr-116. Residues Lys-117 and Lys-121 each carry the N6-(2-hydroxyisobutyryl)lysine; alternate modification. An N6-(beta-hydroxybutyryl)lysine; alternate modification is found at Lys-117. Lys-117 and Lys-121 each carry N6-lactoyllysine; alternate. 2 positions are modified to N6-glutaryllysine; alternate: Lys-117 and Lys-121. N6-succinyllysine; alternate occurs at positions 117 and 121. Lys-117 is subject to N6-methylated lysine; alternate. Lys-121 is covalently cross-linked (Glycyl lysine isopeptide (Lys-Gly) (interchain with G-Cter in ubiquitin); alternate).

The protein belongs to the histone H2B family. In terms of assembly, the nucleosome is a histone octamer containing two molecules each of H2A, H2B, H3 and H4 assembled in one H3-H4 heterotetramer and two H2A-H2B heterodimers. The octamer wraps approximately 147 bp of DNA. Post-translationally, monoubiquitination at Lys-35 (H2BK34Ub) by the MSL1/MSL2 dimer is required for histone H3 'Lys-4' (H3K4me) and 'Lys-79' (H3K79me) methylation and transcription activation at specific gene loci, such as HOXA9 and MEIS1 loci. Similarly, monoubiquitination at Lys-121 (H2BK120Ub) by the RNF20/40 complex gives a specific tag for epigenetic transcriptional activation and is also prerequisite for histone H3 'Lys-4' and 'Lys-79' methylation. It also functions cooperatively with the FACT dimer to stimulate elongation by RNA polymerase II. H2BK120Ub also acts as a regulator of mRNA splicing: deubiquitination by USP49 is required for efficient cotranscriptional splicing of a large set of exons. Phosphorylated on Ser-15 (H2BS14ph) by STK4/MST1 during apoptosis; which facilitates apoptotic chromatin condensation. Also phosphorylated on Ser-15 in response to DNA double strand breaks (DSBs), and in correlation with somatic hypermutation and immunoglobulin class-switch recombination. Phosphorylation at Ser-37 (H2BS36ph) by AMPK in response to stress promotes transcription. In terms of processing, glcNAcylation at Ser-113 promotes monoubiquitination of Lys-121. It fluctuates in response to extracellular glucose, and associates with transcribed genes. Post-translationally, ADP-ribosylated by PARP1 or PARP2 on Ser-7 (H2BS6ADPr) in response to DNA damage. H2BS6ADPr promotes recruitment of CHD1L. Poly ADP-ribosylation on Glu-36 (H2BE35ADPr) by PARP1 regulates adipogenesis: it inhibits phosphorylation at Ser-37 (H2BS36ph), thereby blocking expression of pro-adipogenetic genes. Crotonylation (Kcr) is specifically present in male germ cells and marks testis-specific genes in post-meiotic cells, including X-linked genes that escape sex chromosome inactivation in haploid cells. Crotonylation marks active promoters and enhancers and confers resistance to transcriptional repressors. It is also associated with post-meiotically activated genes on autosomes. In terms of processing, hydroxybutyrylation of histones is induced by starvation. Post-translationally, lactylated in macrophages by EP300/P300 by using lactoyl-CoA directly derived from endogenous or exogenous lactate, leading to stimulates gene transcription.

The protein resides in the nucleus. Its subcellular location is the chromosome. In terms of biological role, core component of nucleosome. Nucleosomes wrap and compact DNA into chromatin, limiting DNA accessibility to the cellular machineries which require DNA as a template. Histones thereby play a central role in transcription regulation, DNA repair, DNA replication and chromosomal stability. DNA accessibility is regulated via a complex set of post-translational modifications of histones, also called histone code, and nucleosome remodeling. This chain is Histone H2B type 2-B, found in Mus musculus (Mouse).